A 429-amino-acid polypeptide reads, in one-letter code: Serine hydroxymethyltransferase (429 aa).

Residue 120–122 (GHI) coordinates (6S)-5,6,7,8-tetrahydrofolate. The residue at position 226 (Lys-226) is an N6-(pyridoxal phosphate)lysine.

Belongs to the SHMT family. As to quaternary structure, homodimer. Requires pyridoxal 5'-phosphate as cofactor.

The protein localises to the cytoplasm. It carries out the reaction 5,10-methylenetetrahydromethanopterin + glycine + H2O = 5,6,7,8-tetrahydromethanopterin + L-serine. The enzyme catalyses L-allo-threonine = acetaldehyde + glycine. Its pathway is amino-acid biosynthesis; glycine biosynthesis; glycine from L-serine: step 1/1. Its function is as follows. Catalyzes the reversible interconversion of serine and glycine with tetrahydromethanopterin (H4MPT) serving as the one-carbon carrier. The use of tetrahydrofolate (THF or H4PteGlu) as the pteridine substrate is 450-fold less efficient than that of H4MPT. Also exhibits a pteridine-independent aldolase activity toward beta-hydroxyamino acids, producing glycine and aldehydes, via a retro-aldol mechanism. Thus, is able to catalyze the cleavage of L-allo-threonine and L-threo-beta-phenylserine. This is Serine hydroxymethyltransferase from Methanocaldococcus jannaschii (strain ATCC 43067 / DSM 2661 / JAL-1 / JCM 10045 / NBRC 100440) (Methanococcus jannaschii).